A 239-amino-acid chain; its full sequence is tRNA (guanine-N(1)-)-methyltransferase (239 aa).

Residues glycine 110 and 130 to 135 (IGDYVL) each bind S-adenosyl-L-methionine.

The protein belongs to the RNA methyltransferase TrmD family. Homodimer.

It is found in the cytoplasm. The enzyme catalyses guanosine(37) in tRNA + S-adenosyl-L-methionine = N(1)-methylguanosine(37) in tRNA + S-adenosyl-L-homocysteine + H(+). Specifically methylates guanosine-37 in various tRNAs. The polypeptide is tRNA (guanine-N(1)-)-methyltransferase (Borrelia garinii subsp. bavariensis (strain ATCC BAA-2496 / DSM 23469 / PBi) (Borreliella bavariensis)).